A 283-amino-acid polypeptide reads, in one-letter code: Pantothenate synthetase (283 aa).

26-33 (MGNLHEGH) lines the ATP pocket. Residue His33 is the Proton donor of the active site. Gln57 serves as a coordination point for (R)-pantoate. Gln57 is a beta-alanine binding site. 144–147 (GKKD) contributes to the ATP binding site. Gln150 contributes to the (R)-pantoate binding site. Residues Val173 and 181–184 (LSSR) contribute to the ATP site.

The protein belongs to the pantothenate synthetase family. As to quaternary structure, homodimer.

The protein resides in the cytoplasm. The catalysed reaction is (R)-pantoate + beta-alanine + ATP = (R)-pantothenate + AMP + diphosphate + H(+). It participates in cofactor biosynthesis; (R)-pantothenate biosynthesis; (R)-pantothenate from (R)-pantoate and beta-alanine: step 1/1. Catalyzes the condensation of pantoate with beta-alanine in an ATP-dependent reaction via a pantoyl-adenylate intermediate. The polypeptide is Pantothenate synthetase (Ralstonia nicotianae (strain ATCC BAA-1114 / GMI1000) (Ralstonia solanacearum)).